The following is a 586-amino-acid chain: Proteasome-associated ATPase (586 aa).

Residues 11-76 adopt a coiled-coil conformation; that stretch reads AWRELEAVRA…LREEVDRLGQ (66 aa). Residue 273–278 participates in ATP binding; it reads GCGKTL. A docks into pockets in the proteasome alpha-ring region spans residues 585–586; sequence YL.

Belongs to the AAA ATPase family. As to quaternary structure, homohexamer. Assembles into a hexameric ring structure that caps the 20S proteasome core. Strongly interacts with the prokaryotic ubiquitin-like protein Pup through a hydrophobic interface; the interacting region of ARC lies in its N-terminal coiled-coil domain. There is one Pup binding site per ARC hexamer ring. Upon ATP-binding, the C-terminus of ARC interacts with the alpha-rings of the proteasome core, possibly by binding to the intersubunit pockets.

It participates in protein degradation; proteasomal Pup-dependent pathway. Functionally, ATPase which is responsible for recognizing, binding, unfolding and translocation of pupylated proteins into the bacterial 20S proteasome core particle. May be essential for opening the gate of the 20S proteasome via an interaction with its C-terminus, thereby allowing substrate entry and access to the site of proteolysis. Thus, the C-termini of the proteasomal ATPase may function like a 'key in a lock' to induce gate opening and therefore regulate proteolysis. The chain is Proteasome-associated ATPase from Nocardia farcinica (strain IFM 10152).